A 132-amino-acid chain; its full sequence is Large ribosomal subunit protein bL17 (132 aa).

This sequence belongs to the bacterial ribosomal protein bL17 family. As to quaternary structure, part of the 50S ribosomal subunit. Contacts protein L32.

The protein is Large ribosomal subunit protein bL17 of Ruthia magnifica subsp. Calyptogena magnifica.